A 1343-amino-acid chain; its full sequence is Kinesin-like protein KIF7 (1343 aa).

Residues 15-349 (PVRVALRVRP…LNYASRAQNI (335 aa)) form the Kinesin motor domain. Residue 94 to 101 (GQTGSGKT) coordinates ATP. 3 disordered regions span residues 356–382 (NWRPEAERPPEETASGARGPPRHRSET), 451–483 (RSALSSASGPDSGIESASVEDQAAQGAGGRKED), and 611–639 (EVNRLGSGSSAASEEEEEEEEPPRRTLHL). The interval 358 to 479 (RPEAERPPEE…EDQAAQGAGG (122 aa)) is interaction with DLG5. The interval 358 to 1206 (RPEAERPPEE…LGRYMWINQE (849 aa)) is interaction with SMO. Positions 480 to 542 (RKEDEGAQQL…ELRLRLELVR (63 aa)) form a coiled coil. Positions 513 to 775 (AMEQYKLQSD…LRELEGKELQ (263 aa)) are sufficient for interaction with NPHP1. Coiled coils occupy residues 698 to 1057 (ASEW…AAIE) and 1109 to 1211 (TLRE…KQKL). Ser-898 is subject to Phosphoserine. 2 disordered regions span residues 1219–1238 (HSRGGEKRSLCSEGRQAPGN) and 1310–1343 (GEAGLPWNFGPLSKPRRELRRASPGMIDVRKNPL).

Belongs to the TRAFAC class myosin-kinesin ATPase superfamily. Kinesin family. KIF27 subfamily. In terms of assembly, can form homodimers and interacts with microtubules. Interacts with GLI1, GLI2, GLI3, SMO and SUFU. Interacts with NPHP1. Interacts with SMO and DLG5 (via PDZ4 or guanylate kinase-like domain). In terms of processing, polyubiquitinated by UBR3. Embryonic stem cells, melanotic melanoma and Jurkat T-cells. Expressed in heart, lung, liver, kidney, testis, retina, placenta, pancreas, colon, small intestin, prostate and thymus.

Its subcellular location is the cell projection. It localises to the cilium. It is found in the cytoplasm. The protein localises to the cytoskeleton. The protein resides in the cilium basal body. Functionally, essential for hedgehog signaling regulation: acts both as a negative and positive regulator of sonic hedgehog (Shh) and Indian hedgehog (Ihh) pathways, acting downstream of SMO, through both SUFU-dependent and -independent mechanisms. Involved in the regulation of microtubular dynamics. Required for proper organization of the ciliary tip and control of ciliary localization of SUFU-GLI2 complexes. Required for localization of GLI3 to cilia in response to Shh. Negatively regulates Shh signaling by preventing inappropriate activation of the transcriptional activator GLI2 in the absence of ligand. Positively regulates Shh signaling by preventing the processing of the transcription factor GLI3 into its repressor form. In keratinocytes, promotes the dissociation of SUFU-GLI2 complexes, GLI2 nuclear translocation and Shh signaling activation. Involved in the regulation of epidermal differentiation and chondrocyte development. The protein is Kinesin-like protein KIF7 (KIF7) of Homo sapiens (Human).